The chain runs to 294 residues: 33 kDa chaperonin (294 aa).

2 disulfide bridges follow: C237–C239 and C270–C273.

It belongs to the HSP33 family. In terms of processing, under oxidizing conditions two disulfide bonds are formed involving the reactive cysteines. Under reducing conditions zinc is bound to the reactive cysteines and the protein is inactive.

It is found in the cytoplasm. Redox regulated molecular chaperone. Protects both thermally unfolding and oxidatively damaged proteins from irreversible aggregation. Plays an important role in the bacterial defense system toward oxidative stress. The chain is 33 kDa chaperonin from Geobacillus kaustophilus (strain HTA426).